The following is a 360-amino-acid chain: Phospho-N-acetylmuramoyl-pentapeptide-transferase (360 aa).

The next 10 helical transmembrane spans lie at 18–38 (VFSY…FISL), 73–93 (TMGG…WADL), 94–114 (SNIY…VGFV), 134–154 (YFWQ…IAQG), 168–188 (LLPQ…VGTS), 199–219 (GLAI…AYVT), 239–259 (LVIV…FNTY), 263–283 (VFMG…IAIL), 288–308 (LVLF…ILQV), and 338–358 (VIVR…ATLK).

The protein belongs to the glycosyltransferase 4 family. MraY subfamily. It depends on Mg(2+) as a cofactor.

The protein localises to the cell inner membrane. The catalysed reaction is UDP-N-acetyl-alpha-D-muramoyl-L-alanyl-gamma-D-glutamyl-meso-2,6-diaminopimeloyl-D-alanyl-D-alanine + di-trans,octa-cis-undecaprenyl phosphate = di-trans,octa-cis-undecaprenyl diphospho-N-acetyl-alpha-D-muramoyl-L-alanyl-D-glutamyl-meso-2,6-diaminopimeloyl-D-alanyl-D-alanine + UMP. Its pathway is cell wall biogenesis; peptidoglycan biosynthesis. Its function is as follows. Catalyzes the initial step of the lipid cycle reactions in the biosynthesis of the cell wall peptidoglycan: transfers peptidoglycan precursor phospho-MurNAc-pentapeptide from UDP-MurNAc-pentapeptide onto the lipid carrier undecaprenyl phosphate, yielding undecaprenyl-pyrophosphoryl-MurNAc-pentapeptide, known as lipid I. This is Phospho-N-acetylmuramoyl-pentapeptide-transferase from Colwellia psychrerythraea (strain 34H / ATCC BAA-681) (Vibrio psychroerythus).